The sequence spans 340 residues: Glycerol-3-phosphate dehydrogenase [NAD(P)+] (340 aa).

4 residues coordinate NADPH: Ser-15, Tyr-16, His-36, and Lys-110. Sn-glycerol 3-phosphate is bound by residues Lys-110, Gly-139, and Thr-141. Residue Ala-143 coordinates NADPH. Positions 196, 249, 259, 260, and 261 each coordinate sn-glycerol 3-phosphate. Lys-196 functions as the Proton acceptor in the catalytic mechanism. Residue Arg-260 coordinates NADPH. Residues Val-284 and Glu-286 each contribute to the NADPH site.

This sequence belongs to the NAD-dependent glycerol-3-phosphate dehydrogenase family.

The protein localises to the cytoplasm. The enzyme catalyses sn-glycerol 3-phosphate + NAD(+) = dihydroxyacetone phosphate + NADH + H(+). It carries out the reaction sn-glycerol 3-phosphate + NADP(+) = dihydroxyacetone phosphate + NADPH + H(+). It participates in membrane lipid metabolism; glycerophospholipid metabolism. In terms of biological role, catalyzes the reduction of the glycolytic intermediate dihydroxyacetone phosphate (DHAP) to sn-glycerol 3-phosphate (G3P), the key precursor for phospholipid synthesis. The polypeptide is Glycerol-3-phosphate dehydrogenase [NAD(P)+] (Serratia marcescens).